The sequence spans 285 residues: NADPH-dependent 7-cyano-7-deazaguanine reductase (285 aa).

A substrate-binding site is contributed by 91–93 (IES). 93-94 (SK) is a binding site for NADPH. Cysteine 191 acts as the Thioimide intermediate in catalysis. Aspartate 198 serves as the catalytic Proton donor. Position 230–231 (230–231 (HE)) interacts with substrate. Residue 259–260 (RG) participates in NADPH binding.

This sequence belongs to the GTP cyclohydrolase I family. QueF type 2 subfamily. As to quaternary structure, homodimer.

Its subcellular location is the cytoplasm. It carries out the reaction 7-aminomethyl-7-carbaguanine + 2 NADP(+) = 7-cyano-7-deazaguanine + 2 NADPH + 3 H(+). The protein operates within tRNA modification; tRNA-queuosine biosynthesis. Its function is as follows. Catalyzes the NADPH-dependent reduction of 7-cyano-7-deazaguanine (preQ0) to 7-aminomethyl-7-deazaguanine (preQ1). The chain is NADPH-dependent 7-cyano-7-deazaguanine reductase from Legionella pneumophila (strain Lens).